Here is a 143-residue protein sequence, read N- to C-terminus: Hemoglobin subunit alpha (143 aa).

Ser-2 bears the N-acetylserine mark. The Globin domain maps to 2–143 (SLSDKDKAAV…VALALAEKYR (142 aa)). His-60 is a binding site for O2. His-89 serves as a coordination point for heme b.

This sequence belongs to the globin family. In terms of assembly, heterotetramer of two alpha chains and two beta chains. As to expression, red blood cells.

Its function is as follows. Involved in oxygen transport from the lung to the various peripheral tissues. This Artedidraco orianae (Barbeled plunderfish) protein is Hemoglobin subunit alpha (hba).